The chain runs to 90 residues: Small ribosomal subunit protein bS16 (90 aa).

The protein belongs to the bacterial ribosomal protein bS16 family.

This chain is Small ribosomal subunit protein bS16, found in Bacillus velezensis (strain DSM 23117 / BGSC 10A6 / LMG 26770 / FZB42) (Bacillus amyloliquefaciens subsp. plantarum).